Reading from the N-terminus, the 363-residue chain is UDP-N-acetylglucosamine--N-acetylmuramyl-(pentapeptide) pyrophosphoryl-undecaprenol N-acetylglucosamine transferase (363 aa).

Residues 15–17 (TGG), Asn-127, Arg-163, Ser-191, Ile-244, 263–268 (ALTVSE), and Gln-288 each bind UDP-N-acetyl-alpha-D-glucosamine.

This sequence belongs to the glycosyltransferase 28 family. MurG subfamily.

It is found in the cell inner membrane. It catalyses the reaction di-trans,octa-cis-undecaprenyl diphospho-N-acetyl-alpha-D-muramoyl-L-alanyl-D-glutamyl-meso-2,6-diaminopimeloyl-D-alanyl-D-alanine + UDP-N-acetyl-alpha-D-glucosamine = di-trans,octa-cis-undecaprenyl diphospho-[N-acetyl-alpha-D-glucosaminyl-(1-&gt;4)]-N-acetyl-alpha-D-muramoyl-L-alanyl-D-glutamyl-meso-2,6-diaminopimeloyl-D-alanyl-D-alanine + UDP + H(+). Its pathway is cell wall biogenesis; peptidoglycan biosynthesis. In terms of biological role, cell wall formation. Catalyzes the transfer of a GlcNAc subunit on undecaprenyl-pyrophosphoryl-MurNAc-pentapeptide (lipid intermediate I) to form undecaprenyl-pyrophosphoryl-MurNAc-(pentapeptide)GlcNAc (lipid intermediate II). This is UDP-N-acetylglucosamine--N-acetylmuramyl-(pentapeptide) pyrophosphoryl-undecaprenol N-acetylglucosamine transferase from Pectobacterium carotovorum subsp. carotovorum (strain PC1).